Reading from the N-terminus, the 417-residue chain is Hydrogen cyanide synthase subunit HcnC (417 aa).

The N-terminal stretch at 1-18 is a signal peptide; sequence MIKHYDVVIAGGGVIGAS. Residue 7–21 coordinates FAD; the sequence is VVIAGGGVIGASCAY. C19 is lipidated: N-palmitoyl cysteine. The S-diacylglycerol cysteine moiety is linked to residue C19. A helical transmembrane segment spans residues 46–66; it reads SAGGLWAIGESVGLGCGVIFF.

Belongs to the FAD-dependent glycerol-3-phosphate dehydrogenase family. In terms of assembly, heterotrimer of HcnA, HcnB and HcnC.

It is found in the cell membrane. It catalyses the reaction glycine + 2 A = hydrogen cyanide + 2 AH2 + CO2. A three-component membrane-bound flavoenzyme that catalyzes the formation of hydrogen cyanide, a secondary metabolite, by transfer of electrons to a cyanide-resistant branch of the aerobic respiratory chain. Contributes to suppression of black root rot of tobacco. The chain is Hydrogen cyanide synthase subunit HcnC from Pseudomonas protegens (strain DSM 19095 / LMG 27888 / CFBP 6595 / CHA0).